The following is a 349-amino-acid chain: Soluble TNF receptor II (349 aa).

Positions 1 to 19 are cleaved as a signal peptide; sequence MKSVLYSYILFLSCIIING. 2 TNFR-Cys repeats span residues 31–65 and 67–108; these read KCKDNEYKRHNLCCLSCPPGTYASRLCDSKTNTQC and PCGS…NRIC. Intrachain disulfides connect Cys-32–Cys-43, Cys-44–Cys-57, Cys-47–Cys-65, Cys-68–Cys-83, Cys-86–Cys-100, and Cys-90–Cys-108. N-linked (GlcNAc...) asparagine; by host glycosylation is found at Asn-101, Asn-189, and Asn-248.

It belongs to the orthopoxvirus OPG002 family.

Its function is as follows. Inhibits host immune defense by binding to host TNF and various chemokines in the extracellular space. Binds host CC chemokines (beta chemokines) and CXC chemokines (alpha chemokines). The polypeptide is Soluble TNF receptor II (OPG002) (Camelus).